The chain runs to 259 residues: 5'-nucleotidase SurE (259 aa).

A divalent metal cation-binding residues include Asp8, Asp9, Ser40, and Asn92.

It belongs to the SurE nucleotidase family. Requires a divalent metal cation as cofactor.

It localises to the cytoplasm. It catalyses the reaction a ribonucleoside 5'-phosphate + H2O = a ribonucleoside + phosphate. In terms of biological role, nucleotidase that shows phosphatase activity on nucleoside 5'-monophosphates. This Xanthomonas campestris pv. campestris (strain 8004) protein is 5'-nucleotidase SurE.